Consider the following 225-residue polypeptide: Thymidylate kinase (225 aa).

10-17 (GIDGAGKS) contributes to the ATP binding site.

It belongs to the thymidylate kinase family.

It carries out the reaction dTMP + ATP = dTDP + ADP. Phosphorylation of dTMP to form dTDP in both de novo and salvage pathways of dTTP synthesis. This chain is Thymidylate kinase, found in Polaromonas sp. (strain JS666 / ATCC BAA-500).